A 248-amino-acid polypeptide reads, in one-letter code: Neurovirulence factor ICP34.5 (248 aa).

Positions 1–14 are enriched in basic residues; it reads MARRRRHRGPRRPR. A required for nucleolar localization region spans residues 1–16; that stretch reads MARRRRHRGPRRPRPP. Disordered stretches follow at residues 1–129 and 149–174; these read MARR…FRLP and RRAG…TPAT. Positions 24-35 are enriched in polar residues; sequence TAQSQVTSTPNS. Over residues 45–58 the composition is skewed to pro residues; the sequence is AAPPPPPAGGPPPS. Over residues 73–83 the composition is skewed to acidic residues; that stretch reads ASDDDDDDDWP. Pro residues-rich tracts occupy residues 84–93 and 119–128; these read DSPPPEPAPE and SHPPSRPFRL. The Nuclear export signal signature appears at 128 to 137; sequence LPPRLALRLR. Tandem repeats lie at residues 161-163, 164-166, 167-169, 170-172, and 173-175. The interval 161–175 is 5 X 3 AA tandem repeats of A-T-P; it reads ATPATPATPATPATP. The segment covering 164–174 has biased composition (low complexity); sequence ATPATPATPAT. A binding to PP1CA region spans residues 175–188; the sequence is PARVRFSPHVRVRH. Residues 175–188 form an interaction with host PPP1CA region; that stretch reads PARVRFSPHVRVRH. The segment at 190 to 248 is important for interferon resistance; it reads VVWASAARLARRGSWARERADRARFRRRVAEAEAVIGPCLGPEARARALARGAGPANSV. The Bipartite nuclear localization signal motif lies at 200 to 218; it reads RRGSWARERADRARFRRRV. The interval 218-233 is interaction with host EIF2S1/EIF-2ALPHA; the sequence is VAEAEAVIGPCLGPEA.

This sequence belongs to the PPP1R15 family. As to quaternary structure, interacts with host PPP1CA; this interaction forms a high-molecular-weight complex that dephosphorylates EIF2S1/eIF-2alpha. Interacts with host EIF2S1/eIF-2alpha; this interaction is crucial for the specific dephosphorylation of EIF2S1/eIF-2alpha by PPP1CA. Binds to proliferating cell nuclear antigen (PCNA), which may release host cells from growth arrest and facilitate viral replication. Interacts (via N-terminus) with host C1QBP; this interaction allows C1QBP to be recruited to the inner nuclear membrane by ICP34.5. Interacts with host PRKCA. Interacts with protein UL31. Interacts with host STING/TMEM173; this interaction inhibits the intracellular DNA sensing pathway. Interacts with host BECN1; this interaction modulates host autophagy.

The protein resides in the host cytoplasm. The protein localises to the host nucleus. Its subcellular location is the host nucleolus. It localises to the virion. Inhibits the establishment of the immune response and of the integrated stress response (ISR) in the infected cell. Plays essential roles in viral nuclear egress to mediate capsid transit across the nuclear membrane. Facilitates nuclear egress cooperatively with host C1QBP and protein kinase C/PKC to induce lamin A/C phosphorylation and subsequent reorganization. In turn, lamina disassembles and nuclear egress occurs. Recruits the serine/threonine protein phosphatase PPP1CA/PP1-alpha to dephosphorylate the translation initiation factor EIF2S1/eIF-2alpha, thereby couteracting the host shutoff of protein synthesis involving double-stranded RNA-dependent protein kinase EIF2AK2/PKR. In turn, controls host IRF3 activation and subsequently inhibits host interferon response. Controls the DNA sensing pathway by interacting with and inhibiting host STING/TMEM173. Also down-modulates the host MHC class II proteins cell surface expression. Acts as a neurovirulence factor that has a profound effect on the growth of the virus in central nervous system tissue, by interacting with host BECN1 and thereby antagonizing the host autophagy response. This Homo sapiens (Human) protein is Neurovirulence factor ICP34.5 (ICP34.5).